We begin with the raw amino-acid sequence, 218 residues long: 25.3 kDa vesicle transport protein SEC22-1 (218 aa).

Over M1 to A192 the chain is Cytoplasmic. The 115-residue stretch at L6–I120 folds into the Longin domain. A v-SNARE coiled-coil homology domain is found at N135–R195. Residues L193 to V213 form a helical; Anchor for type IV membrane protein membrane-spanning segment. The Vesicular portion of the chain corresponds to K214–W218.

Belongs to the synaptobrevin family. As to quaternary structure, interacts with SEC24A. In terms of tissue distribution, mainly expressed in flowers and siliques, to a lower extent in seedlings, and barely in roots and leaves.

It is found in the golgi apparatus membrane. Its subcellular location is the endoplasmic reticulum membrane. Its function is as follows. V-SNARE involved in vesicle trafficking from the ER to the Golgi complex and required for early secretion. Involved in endoplasmic reticulum (ER) biogenesis and functions as well as for Golgi-stack integrity. Essential for gametophytes development. Involved in cesium Cs(+) accumulation, a non-essential cation. The sequence is that of 25.3 kDa vesicle transport protein SEC22-1 from Arabidopsis thaliana (Mouse-ear cress).